A 273-amino-acid chain; its full sequence is Polyamine aminopropyltransferase (273 aa).

The PABS domain maps to 5–238; the sequence is ENWFSERYSD…GFWSFTVASP (234 aa). Gln-34 provides a ligand contact to S-methyl-5'-thioadenosine. Residues His-65 and Asp-90 each contribute to the spermidine site. Residues Glu-109 and 140–141 contribute to the S-methyl-5'-thioadenosine site; that span reads DG. The active-site Proton acceptor is Asp-158. 158–161 provides a ligand contact to spermidine; sequence DSTD. Pro-165 is a binding site for S-methyl-5'-thioadenosine.

This sequence belongs to the spermidine/spermine synthase family. As to quaternary structure, homodimer or homotetramer.

The protein resides in the cytoplasm. The enzyme catalyses S-adenosyl 3-(methylsulfanyl)propylamine + putrescine = S-methyl-5'-thioadenosine + spermidine + H(+). The protein operates within amine and polyamine biosynthesis; spermidine biosynthesis; spermidine from putrescine: step 1/1. In terms of biological role, catalyzes the irreversible transfer of a propylamine group from the amino donor S-adenosylmethioninamine (decarboxy-AdoMet) to putrescine (1,4-diaminobutane) to yield spermidine. The polypeptide is Polyamine aminopropyltransferase (Thermoplasma acidophilum (strain ATCC 25905 / DSM 1728 / JCM 9062 / NBRC 15155 / AMRC-C165)).